The primary structure comprises 123 residues: MPTIQQLIRSQRKKVEKKTKSPALRGCPQRRGVCTRVYTTTPKKPNSALRKVARVRLTSGFEVTAYIPGIGHNLQEHSVVLVRGGRVKDLPGVRYHIVRGILDTAGVKDRSQGRSKYGVKRPK.

It belongs to the universal ribosomal protein uS12 family. Part of the 30S ribosomal subunit.

It localises to the plastid. The protein resides in the chloroplast. In terms of biological role, with S4 and S5 plays an important role in translational accuracy. Located at the interface of the 30S and 50S subunits. The chain is Small ribosomal subunit protein uS12c (rps12) from Chlorokybus atmophyticus (Soil alga).